We begin with the raw amino-acid sequence, 396 residues long: NADH-quinone oxidoreductase subunit D (396 aa).

This sequence belongs to the complex I 49 kDa subunit family. In terms of assembly, NDH-1 is composed of 14 different subunits. Subunits NuoB, C, D, E, F, and G constitute the peripheral sector of the complex.

Its subcellular location is the cell inner membrane. The catalysed reaction is a quinone + NADH + 5 H(+)(in) = a quinol + NAD(+) + 4 H(+)(out). Its function is as follows. NDH-1 shuttles electrons from NADH, via FMN and iron-sulfur (Fe-S) centers, to quinones in the respiratory chain. The immediate electron acceptor for the enzyme in this species is believed to be ubiquinone. Couples the redox reaction to proton translocation (for every two electrons transferred, four hydrogen ions are translocated across the cytoplasmic membrane), and thus conserves the redox energy in a proton gradient. In Agrobacterium fabrum (strain C58 / ATCC 33970) (Agrobacterium tumefaciens (strain C58)), this protein is NADH-quinone oxidoreductase subunit D.